Consider the following 348-residue polypeptide: Abnormal cell lineage protein 44 (348 aa).

The first 25 residues, 1–25 (MRAAPFDFFFQSTALSTFFILCSLA), serve as a signal peptide directing secretion. 11 disulfides stabilise this stretch: cysteine 91–cysteine 102, cysteine 141–cysteine 149, cysteine 151–cysteine 165, cysteine 213–cysteine 227, cysteine 215–cysteine 222, cysteine 272–cysteine 299, cysteine 282–cysteine 294, cysteine 298–cysteine 338, cysteine 314–cysteine 329, cysteine 316–cysteine 326, and cysteine 321–cysteine 322. The O-palmitoleoyl serine; by mom-1 moiety is linked to residue serine 219. N-linked (GlcNAc...) asparagine glycosylation occurs at asparagine 286.

It belongs to the Wnt family. Post-translationally, palmitoleoylation is required for efficient binding to frizzled receptors. Depalmitoleoylation leads to Wnt signaling pathway inhibition. Expressed in the tail hypodermis.

The protein localises to the secreted. It localises to the extracellular space. Its subcellular location is the extracellular matrix. Its function is as follows. Ligand for members of the frizzled family of seven transmembrane receptors. Affects male tail development, vulval precursor cell specification and egg laying. Involved in morphogenesis by influencing polarity of asymmetric cell divisions of the B, U, and F cells in the male, and the T cell in males and hermaphrodites. Controls spindle orientation in B-gamma cell division during male copulatory spicule development. Involved in specification of the P7.p lineage during vulval development. Has a role in providing polarity and default lin-17 localization in axon development and positioning of neuromuscular synapses in DA9 regions by negatively regulating synaptogenesis. Plays a role in motorneuron development by promoting the extension of the anterior neurite of ventral D-type GABAergic motorneurons along the anterior-posterior axis of the ventral nerve cord. Positively regulates cilium position and dendrite morphogenesis in postembryonic PQR gas-sensing neurons. This is likely through regulating the localization of grdn-1 to the distal dendrites of PQR sensory neurons. The chain is Abnormal cell lineage protein 44 from Caenorhabditis elegans.